The primary structure comprises 407 residues: tRNA pseudouridine synthase Pus10 (407 aa).

The active-site Nucleophile is D232. Residues Y300 and Y369 each coordinate substrate.

It belongs to the pseudouridine synthase Pus10 family.

It carries out the reaction uridine(54) in tRNA = pseudouridine(54) in tRNA. The enzyme catalyses uridine(55) in tRNA = pseudouridine(55) in tRNA. Responsible for synthesis of pseudouridine from uracil-54 and uracil-55 in the psi GC loop of transfer RNAs. In Methanosphaera stadtmanae (strain ATCC 43021 / DSM 3091 / JCM 11832 / MCB-3), this protein is tRNA pseudouridine synthase Pus10.